A 123-amino-acid polypeptide reads, in one-letter code: Large ribosomal subunit protein bL21 (123 aa).

Belongs to the bacterial ribosomal protein bL21 family. Part of the 50S ribosomal subunit. Contacts protein L20.

Functionally, this protein binds to 23S rRNA in the presence of protein L20. The chain is Large ribosomal subunit protein bL21 from Rhizobium meliloti (strain 1021) (Ensifer meliloti).